A 454-amino-acid chain; its full sequence is uncharacterized protein (454 aa).

Positions cysteine 364–leucine 405 constitute an HNH domain. A disordered region spans residues asparagine 415–arginine 434.

It belongs to the Rv1128c/1148c/1588c/1702c/1945/3466 family.

This is an uncharacterized protein from Mycobacterium tuberculosis (strain CDC 1551 / Oshkosh).